The primary structure comprises 261 residues: Putative quercetin 2,3-dioxygenase Ta0133 (261 aa).

A divalent metal cation contacts are provided by histidine 17, histidine 19, histidine 61, and glutamate 63.

The protein belongs to the pirin family. A divalent metal cation is required as a cofactor.

The catalysed reaction is quercetin + O2 = 2-(3,4-dihydroxybenzoyloxy)-4,6-dihydroxybenzoate + CO. It functions in the pathway flavonoid metabolism; quercetin degradation. Putative quercetin 2,3-dioxygenase. The chain is Putative quercetin 2,3-dioxygenase Ta0133 from Thermoplasma acidophilum (strain ATCC 25905 / DSM 1728 / JCM 9062 / NBRC 15155 / AMRC-C165).